Reading from the N-terminus, the 203-residue chain is HTH-type transcriptional regulator CymR (203 aa).

An HTH tetR-type domain is found at 13–73 (METQGKLIAA…ATFEWLYEQI (61 aa)). Positions 36–55 (RIADVPGAAGVSRGAQSHHF) form a DNA-binding region, H-T-H motif.

Involved in the repression of the cym and cmt operons which are responsible of the p-cymene degradation. The chain is HTH-type transcriptional regulator CymR from Pseudomonas putida (Arthrobacter siderocapsulatus).